The sequence spans 238 residues: Ribosomal RNA small subunit methyltransferase G (238 aa).

Residues glycine 77, phenylalanine 82, 128–129, and arginine 147 each bind S-adenosyl-L-methionine; that span reads AE.

This sequence belongs to the methyltransferase superfamily. RNA methyltransferase RsmG family.

The protein resides in the cytoplasm. Functionally, specifically methylates the N7 position of guanine in position 535 of 16S rRNA. The polypeptide is Ribosomal RNA small subunit methyltransferase G (Listeria innocua serovar 6a (strain ATCC BAA-680 / CLIP 11262)).